Reading from the N-terminus, the 409-residue chain is Glycosaminoglycan xylosylkinase (409 aa).

At 1 to 6 (MKLKQR) the chain is on the cytoplasmic side. Residues 7–25 (VVLLAILLVIFIFTKVFLI) form a helical; Signal-anchor for type II membrane protein membrane-spanning segment. Over 26 to 409 (DNLDTSAANR…VEDRMPLSHL (384 aa)) the chain is Lumenal. ATP contacts are provided by Q107 and K123. Mn(2+) is bound at residue D142. Residue N193 is glycosylated (N-linked (GlcNAc...) asparagine). 2 disulfide bridges follow: C196/C211 and C201/C204. 222–225 (TLWL) contributes to the ATP binding site. 2 cysteine pairs are disulfide-bonded: C257–C331 and C332–C389. D289 is an active-site residue. Positions 294 and 309 each coordinate ATP. D309 lines the Mn(2+) pocket.

It belongs to the FAM20 family. Requires Mn(2+) as cofactor. In terms of tissue distribution, widely expressed. Strongly expressed in pancreas, spleen and fetal liver.

Its subcellular location is the golgi apparatus membrane. It carries out the reaction 3-O-(beta-D-galactosyl-(1-&gt;3)-beta-D-galactosyl-(1-&gt;4)-beta-D-xylosyl)-L-seryl-[protein] + ATP = 3-O-(beta-D-galactosyl-(1-&gt;3)-beta-D-galactosyl-(1-&gt;4)-beta-D-2-O-phosphoxylosyl)-L-seryl-[protein] + ADP + H(+). Responsible for the 2-O-phosphorylation of xylose in the glycosaminoglycan-protein linkage region of proteoglycans thereby regulating the amount of mature GAG chains. Sulfated glycosaminoglycans (GAGs), including heparan sulfate and chondroitin sulfate, are synthesized on the so-called common GAG-protein linkage region (GlcUAbeta1-3Galbeta1-3Galbeta1-4Xylbeta1-O-Ser) of core proteins, which is formed by the stepwise addition of monosaccharide residues by the respective specific glycosyltransferases. Xylose 2-O-phosphorylation may influence the catalytic activity of B3GAT3 (GlcAT-I) which completes the precursor tetrasaccharide of GAG-protein linkage regions on which the repeating disaccharide region is synthesized. The chain is Glycosaminoglycan xylosylkinase from Homo sapiens (Human).